Consider the following 441-residue polypeptide: ATP-dependent protease ATPase subunit HslU (441 aa).

Residues isoleucine 18, 60–65, aspartate 254, glutamate 319, and arginine 391 contribute to the ATP site; that span reads GVGKTE.

This sequence belongs to the ClpX chaperone family. HslU subfamily. As to quaternary structure, a double ring-shaped homohexamer of HslV is capped on each side by a ring-shaped HslU homohexamer. The assembly of the HslU/HslV complex is dependent on binding of ATP.

It is found in the cytoplasm. ATPase subunit of a proteasome-like degradation complex; this subunit has chaperone activity. The binding of ATP and its subsequent hydrolysis by HslU are essential for unfolding of protein substrates subsequently hydrolyzed by HslV. HslU recognizes the N-terminal part of its protein substrates and unfolds these before they are guided to HslV for hydrolysis. This Shewanella denitrificans (strain OS217 / ATCC BAA-1090 / DSM 15013) protein is ATP-dependent protease ATPase subunit HslU.